Consider the following 347-residue polypeptide: Inositol 2-dehydrogenase (347 aa).

This sequence belongs to the Gfo/Idh/MocA family. Homotetramer.

The catalysed reaction is myo-inositol + NAD(+) = scyllo-inosose + NADH + H(+). Functionally, involved in the oxidation of myo-inositol (MI) to 2-keto-myo-inositol (2KMI or 2-inosose). In Rubrobacter xylanophilus (strain DSM 9941 / JCM 11954 / NBRC 16129 / PRD-1), this protein is Inositol 2-dehydrogenase.